The chain runs to 171 residues: Phosphopantetheine adenylyltransferase (171 aa).

Substrate is bound at residue threonine 9. Residues 9 to 10 and histidine 17 each bind ATP; that span reads TF. 3 residues coordinate substrate: lysine 41, leucine 73, and arginine 87. ATP-binding positions include 88–90, glutamate 98, and 123–129; these read GLR and YQFISGT.

Belongs to the bacterial CoaD family. In terms of assembly, homohexamer. Mg(2+) serves as cofactor.

It is found in the cytoplasm. It carries out the reaction (R)-4'-phosphopantetheine + ATP + H(+) = 3'-dephospho-CoA + diphosphate. Its pathway is cofactor biosynthesis; coenzyme A biosynthesis; CoA from (R)-pantothenate: step 4/5. Its function is as follows. Reversibly transfers an adenylyl group from ATP to 4'-phosphopantetheine, yielding dephospho-CoA (dPCoA) and pyrophosphate. This Paraburkholderia phytofirmans (strain DSM 17436 / LMG 22146 / PsJN) (Burkholderia phytofirmans) protein is Phosphopantetheine adenylyltransferase.